The chain runs to 457 residues: tRNA modification GTPase MnmE (457 aa).

Arginine 25, glutamate 87, and arginine 126 together coordinate (6S)-5-formyl-5,6,7,8-tetrahydrofolate. Residues 223 to 377 (GISTAIIGRP…IEERINQLFF (155 aa)) enclose the TrmE-type G domain. Asparagine 233 is a K(+) binding site. Residues 233 to 238 (NVGKSS), 252 to 258 (TDIEGTT), and 277 to 280 (DTAG) each bind GTP. Position 237 (serine 237) interacts with Mg(2+). Residues threonine 252, isoleucine 254, and threonine 257 each coordinate K(+). Threonine 258 contributes to the Mg(2+) binding site. Lysine 457 serves as a coordination point for (6S)-5-formyl-5,6,7,8-tetrahydrofolate.

It belongs to the TRAFAC class TrmE-Era-EngA-EngB-Septin-like GTPase superfamily. TrmE GTPase family. As to quaternary structure, homodimer. Heterotetramer of two MnmE and two MnmG subunits. K(+) serves as cofactor.

Its subcellular location is the cytoplasm. Functionally, exhibits a very high intrinsic GTPase hydrolysis rate. Involved in the addition of a carboxymethylaminomethyl (cmnm) group at the wobble position (U34) of certain tRNAs, forming tRNA-cmnm(5)s(2)U34. The polypeptide is tRNA modification GTPase MnmE (Streptococcus sanguinis (strain SK36)).